A 424-amino-acid polypeptide reads, in one-letter code: Tyrosine--tRNA ligase (424 aa).

Tyr-37 contacts L-tyrosine. A 'HIGH' region motif is present at residues Pro-42 to Ser-51. Positions 174 and 178 each coordinate L-tyrosine. A 'KMSKS' region motif is present at residues Lys-234–Thr-238. Lys-237 contributes to the ATP binding site. Positions Ser-357–Asp-422 constitute an S4 RNA-binding domain.

It belongs to the class-I aminoacyl-tRNA synthetase family. TyrS type 1 subfamily. As to quaternary structure, homodimer.

It is found in the cytoplasm. It carries out the reaction tRNA(Tyr) + L-tyrosine + ATP = L-tyrosyl-tRNA(Tyr) + AMP + diphosphate + H(+). In terms of biological role, catalyzes the attachment of tyrosine to tRNA(Tyr) in a two-step reaction: tyrosine is first activated by ATP to form Tyr-AMP and then transferred to the acceptor end of tRNA(Tyr). This is Tyrosine--tRNA ligase from Chromobacterium violaceum (strain ATCC 12472 / DSM 30191 / JCM 1249 / CCUG 213 / NBRC 12614 / NCIMB 9131 / NCTC 9757 / MK).